We begin with the raw amino-acid sequence, 347 residues long: UDP-N-acetylenolpyruvoylglucosamine reductase (347 aa).

The region spanning 24–195 (FDARARVAAR…VAVTFRLPKA (172 aa)) is the FAD-binding PCMH-type domain. R171 is a catalytic residue. Catalysis depends on S247, which acts as the Proton donor. E343 is an active-site residue.

It belongs to the MurB family. FAD serves as cofactor.

Its subcellular location is the cytoplasm. It catalyses the reaction UDP-N-acetyl-alpha-D-muramate + NADP(+) = UDP-N-acetyl-3-O-(1-carboxyvinyl)-alpha-D-glucosamine + NADPH + H(+). Its pathway is cell wall biogenesis; peptidoglycan biosynthesis. Cell wall formation. This Burkholderia mallei (strain NCTC 10247) protein is UDP-N-acetylenolpyruvoylglucosamine reductase.